The following is a 152-amino-acid chain: Interleukin-1 family member 10 (152 aa).

This sequence belongs to the IL-1 family. Interacts with cargo receptor TMED10; the interaction mediates the translocation from the cytoplasm into the ERGIC (endoplasmic reticulum-Golgi intermediate compartment) and thereby secretion. Expressed in fetal skin, spleen and tonsil. Expressed mostly in the basal epithelia of skin and in proliferating B-cells of the tonsil.

The protein resides in the cytoplasm. It is found in the secreted. Functionally, cytokine with immunomodulatory activity. Alone, does not induce cytokine production, but reduces IL22 and IL17A production by T-cells in response to heat-killed Candida albicans. Reduces IL36G-induced production of IL8 by peripheral blood mononuclear cells. Increases IL6 production by dendritic cells stimulated by bacterial lipopolysaccharides (LPS). Ligand for IL-36R/IL1RL2. In Homo sapiens (Human), this protein is Interleukin-1 family member 10.